The primary structure comprises 305 residues: DNA-directed RNA polymerase 35 kDa subunit (305 aa).

This sequence belongs to the poxviridae DNA-directed RNA polymerase 35 kDa subunit family. In terms of assembly, the DNA-dependent RNA polymerase used for intermediate and late genes expression consists of eight subunits 147 kDa, 133 kDa, 35 kDa, 30 kDa, 22 kDa, 19 kDa, 18 kDa and 7 kDa totalling more than 500 kDa in mass. The same holoenzyme, with the addition of the transcription-specificity factor RAP94, is used for early gene expression.

Its subcellular location is the virion. The catalysed reaction is RNA(n) + a ribonucleoside 5'-triphosphate = RNA(n+1) + diphosphate. In terms of biological role, part of the DNA-dependent RNA polymerase which catalyzes the transcription of viral DNA into RNA using the four ribonucleoside triphosphates as substrates. Responsible for the transcription of early, intermediate and late genes. DNA-dependent RNA polymerase associates with the early transcription factor (ETF), itself composed of D6 and A7, thereby allowing the early genes transcription. Late transcription, and probably also intermediate transcription, require newly synthesized RNA polymerase. The polypeptide is DNA-directed RNA polymerase 35 kDa subunit (OPG156) (Variola virus (isolate Human/India/Ind3/1967) (VARV)).